The sequence spans 339 residues: Tetraacyldisaccharide 4'-kinase (339 aa).

53–60 contacts ATP; it reads TCGGAGKT.

The protein belongs to the LpxK family.

It carries out the reaction a lipid A disaccharide + ATP = a lipid IVA + ADP + H(+). Its pathway is glycolipid biosynthesis; lipid IV(A) biosynthesis; lipid IV(A) from (3R)-3-hydroxytetradecanoyl-[acyl-carrier-protein] and UDP-N-acetyl-alpha-D-glucosamine: step 6/6. In terms of biological role, transfers the gamma-phosphate of ATP to the 4'-position of a tetraacyldisaccharide 1-phosphate intermediate (termed DS-1-P) to form tetraacyldisaccharide 1,4'-bis-phosphate (lipid IVA). The chain is Tetraacyldisaccharide 4'-kinase from Bartonella henselae (strain ATCC 49882 / DSM 28221 / CCUG 30454 / Houston 1) (Rochalimaea henselae).